Reading from the N-terminus, the 558-residue chain is Pyrethroid hydrolase Ces2a (558 aa).

The signal sequence occupies residues 1 to 26 (MPLARLPGWLCVVACGLLLLLQHVHG). A disulfide bridge links cysteine 95 with cysteine 122. Lysine 209 is subject to N6-succinyllysine. Serine 227 functions as the Acyl-ester intermediate in the catalytic mechanism. The N-linked (GlcNAc...) asparagine glycan is linked to asparagine 275. A disulfide bridge links cysteine 279 with cysteine 290. An N6-succinyllysine modification is found at lysine 296. Glutamate 344 functions as the Charge relay system in the catalytic mechanism. N-linked (GlcNAc...) asparagine glycosylation occurs at asparagine 361. The Charge relay system role is filled by histidine 456.

It belongs to the type-B carboxylesterase/lipase family.

The protein resides in the microsome. It catalyses the reaction (-)-trans-permethrin + H2O = (3-phenoxyphenyl)methanol + (1S,3R)-3-(2,2-dichlorovinyl)-2,2-dimethylcyclopropanecarboxylate + H(+). The enzyme catalyses all-trans-retinyl hexadecanoate + H2O = all-trans-retinol + hexadecanoate + H(+). In terms of biological role, carboxylesterases that catalyzes the hydrolysis of pyrethroids pesticides. Hydrolyzes permethrin faster than cypermethrin. Hydrolyzes retinyl esters. This chain is Pyrethroid hydrolase Ces2a, found in Mus musculus (Mouse).